The chain runs to 63 residues: Large ribosomal subunit protein bL35 (63 aa).

A compositionally biased stretch (basic residues) spans 1 to 43 (MKMRTHSGAKKRLKVLSSGKVKKKSTRMRHLNSHMSSKTKRQL). The interval 1–45 (MKMRTHSGAKKRLKVLSSGKVKKKSTRMRHLNSHMSSKTKRQLGK) is disordered.

The protein belongs to the bacterial ribosomal protein bL35 family.

The polypeptide is Large ribosomal subunit protein bL35 (Bdellovibrio bacteriovorus (strain ATCC 15356 / DSM 50701 / NCIMB 9529 / HD100)).